A 258-amino-acid polypeptide reads, in one-letter code: MLAKRIIPCLDVRDGQVVKGVQFRNHEIIGDIVPLAKRYAEEGADELVFYDITASSDGRVVDKSWVSRVAEVIDIPFCVAGGIKSLEDAAKILSFGADKISINSPALADPTLITRLADRFGVQCIVVGIDTWYDAETGKYHVNQYTGDESRTRVTQWETLDWVEEVQKRGAGEIVLNMMNQDGVCNGYDLKQLKKVREVCHVPLIASGGAGTMEHFLEAFRDADVDGALAASVFHKQIINIGELKAYLATQGVEIRIC.

Residues Asp11 and Asp130 contribute to the active site.

This sequence belongs to the HisA/HisF family. Heterodimer of HisH and HisF.

It is found in the cytoplasm. The enzyme catalyses 5-[(5-phospho-1-deoxy-D-ribulos-1-ylimino)methylamino]-1-(5-phospho-beta-D-ribosyl)imidazole-4-carboxamide + L-glutamine = D-erythro-1-(imidazol-4-yl)glycerol 3-phosphate + 5-amino-1-(5-phospho-beta-D-ribosyl)imidazole-4-carboxamide + L-glutamate + H(+). It functions in the pathway amino-acid biosynthesis; L-histidine biosynthesis; L-histidine from 5-phospho-alpha-D-ribose 1-diphosphate: step 5/9. In terms of biological role, IGPS catalyzes the conversion of PRFAR and glutamine to IGP, AICAR and glutamate. The HisF subunit catalyzes the cyclization activity that produces IGP and AICAR from PRFAR using the ammonia provided by the HisH subunit. In Shigella flexneri serotype 5b (strain 8401), this protein is Imidazole glycerol phosphate synthase subunit HisF.